The following is a 1004-amino-acid chain: Retrovirus-related Pol polyprotein from type-1 retrotransposable element R1 (1004 aa).

The Reverse transcriptase domain maps to Q450–V717. A nucleic acid-binding endonuclease region spans residues L853–E1004.

It catalyses the reaction DNA(n) + a 2'-deoxyribonucleoside 5'-triphosphate = DNA(n+1) + diphosphate. In Bradysia coprophila (Dark-winged fungus gnat), this protein is Retrovirus-related Pol polyprotein from type-1 retrotransposable element R1.